Consider the following 201-residue polypeptide: Small ribosomal subunit protein uS4 (201 aa).

The S4 RNA-binding domain maps to 91-157 (SRLDNVVYRA…LPFQVARETV (67 aa)).

It belongs to the universal ribosomal protein uS4 family. As to quaternary structure, part of the 30S ribosomal subunit. Contacts protein S5. The interaction surface between S4 and S5 is involved in control of translational fidelity.

In terms of biological role, one of the primary rRNA binding proteins, it binds directly to 16S rRNA where it nucleates assembly of the body of the 30S subunit. With S5 and S12 plays an important role in translational accuracy. The protein is Small ribosomal subunit protein uS4 of Rhodococcus erythropolis (strain PR4 / NBRC 100887).